We begin with the raw amino-acid sequence, 396 residues long: Aspartic protease 1 (396 aa).

Residues 1 to 15 (MQTFVLLALVAACSA) form the signal peptide. Residues 68–389 (YLGNITLGTP…DIGNGQIGFA (322 aa)) enclose the Peptidase A1 domain. The N-linked (GlcNAc...) asparagine glycan is linked to Asn71. Asp86 is a catalytic residue. Cys99 and Cys104 are joined by a disulfide. Asp278 is an active-site residue. Cysteines 313 and 349 form a disulfide.

It belongs to the peptidase A1 family. Interacts with B.thuringiensis endotoxin Cry6Aa; the interaction prevents Cry6Aa proteolysis by host gut proteases.

Its subcellular location is the cytoplasm. The protein resides in the lysosome. The protein localises to the secreted. Aspartic protease, which is part of the necrosis cell death pathway. Promotes B.thuringiensis Cry6Aa stability by preventing its proteolysis by host gut proteases. Required for Cry6Aa-induced necrotic death of intestinal cells. Cry6Aa uptake into the host intestinal cells triggers an increase in intracellular Ca(2+) levels leading to lysosome rupture and to the subsequent release of asp-1 which leads to necrosis. This Caenorhabditis elegans protein is Aspartic protease 1.